Here is a 659-residue protein sequence, read N- to C-terminus: Tetratricopeptide repeat protein 30 homolog (659 aa).

TPR repeat units lie at residues 3–36 (SQNMLIRDGEYTKSIYTMIKEERFQEAINVLNGI), 43–76 (RAGLSLLGHCYYQTQDFIEASNCYEYLVNLVPDV), 143–176 (ATVKNDEGCLLFQANMFEDALQRYVSALQAGGFN), 178–210 (HIAYNAALCHYRKKENSQALNYIAEIVERGIRN), 391–424 (CRSAPDQNALRVALREYEFALESYLPVAMARAWI), 450–483 (TWRLHAAHVLFMRGDRYKEAAAFYEPIVRQNYDD), and 533–566 (CIVNLVIGTLYCAKGNYEFGLSRIAHALDGGSGA).

This sequence belongs to the TTC30/dfy-1/fleer family.

The protein resides in the cell projection. The protein localises to the cilium. Functionally, required for polyglutamylation of axonemal tubulin in sensory cilia. Plays a role in anterograde intraflagellar transport (IFT), the process by which cilia precursors are transported from the base of the cilium to the site of their incorporation at the tip. In Aedes aegypti (Yellowfever mosquito), this protein is Tetratricopeptide repeat protein 30 homolog.